The primary structure comprises 352 residues: Ribosome biogenesis protein BRX1 homolog (352 aa).

The segment at 1–47 (MAATKRKRRGDLEVQAKKPKKNRKDAGQPAKQADVAKEAEEEKDRIP) is disordered. The span at 34 to 46 (DVAKEAEEEKDRI) shows a compositional bias: basic and acidic residues. Residues 59 to 248 (ERILIFSSRG…LIKIFQGSFG (190 aa)) enclose the Brix domain. Residue Lys-159 forms a Glycyl lysine isopeptide (Lys-Gly) (interchain with G-Cter in SUMO2) linkage. A Phosphoserine modification is found at Ser-260. Position 275 is an N6-acetyllysine (Lys-275). The tract at residues 281–301 (QVKDVQKSRKKEPKTILPHDP) is disordered. Residues Lys-313 and Lys-321 each participate in a glycyl lysine isopeptide (Lys-Gly) (interchain with G-Cter in SUMO2) cross-link.

The protein belongs to the BRX1 family.

It localises to the nucleus. It is found in the nucleolus. Required for biogenesis of the 60S ribosomal subunit. This chain is Ribosome biogenesis protein BRX1 homolog (Brix1), found in Rattus norvegicus (Rat).